We begin with the raw amino-acid sequence, 446 residues long: Methylenetetrahydrofolate--tRNA-(uracil-5-)-methyltransferase TrmFO (446 aa).

8–13 serves as a coordination point for FAD; the sequence is GGGLAG.

This sequence belongs to the MnmG family. TrmFO subfamily. Requires FAD as cofactor.

The protein localises to the cytoplasm. The catalysed reaction is uridine(54) in tRNA + (6R)-5,10-methylene-5,6,7,8-tetrahydrofolate + NADH + H(+) = 5-methyluridine(54) in tRNA + (6S)-5,6,7,8-tetrahydrofolate + NAD(+). It carries out the reaction uridine(54) in tRNA + (6R)-5,10-methylene-5,6,7,8-tetrahydrofolate + NADPH + H(+) = 5-methyluridine(54) in tRNA + (6S)-5,6,7,8-tetrahydrofolate + NADP(+). In terms of biological role, catalyzes the folate-dependent formation of 5-methyl-uridine at position 54 (M-5-U54) in all tRNAs. This chain is Methylenetetrahydrofolate--tRNA-(uracil-5-)-methyltransferase TrmFO, found in Zymomonas mobilis subsp. mobilis (strain ATCC 31821 / ZM4 / CP4).